We begin with the raw amino-acid sequence, 896 residues long: Alanine--tRNA ligase (896 aa).

The Zn(2+) site is built by H574, H578, C677, and H681.

The protein belongs to the class-II aminoacyl-tRNA synthetase family. The cofactor is Zn(2+).

It is found in the cytoplasm. It carries out the reaction tRNA(Ala) + L-alanine + ATP = L-alanyl-tRNA(Ala) + AMP + diphosphate. Catalyzes the attachment of alanine to tRNA(Ala) in a two-step reaction: alanine is first activated by ATP to form Ala-AMP and then transferred to the acceptor end of tRNA(Ala). Also edits incorrectly charged Ser-tRNA(Ala) and Gly-tRNA(Ala) via its editing domain. The polypeptide is Alanine--tRNA ligase (Mycoplasma mycoides subsp. mycoides SC (strain CCUG 32753 / NCTC 10114 / PG1)).